We begin with the raw amino-acid sequence, 149 residues long: Hydroalkoxylation enzyme phnH (149 aa).

A signal peptide spans 1–18; sequence MKFTYLVSLAAFAVTALG. Residues Asn-33 and Asn-127 are each glycosylated (N-linked (GlcNAc...) asparagine).

Homotetramer.

It catalyses the reaction 2,4,7,9-tetrahydroxy-6-methyl-8-(2-methylbut-3-en-2-yl)-1-oxo-1H-phenalen-3-ol = (2'R)-atrovenetin. The protein operates within secondary metabolite biosynthesis. Hydroalkoxylation enzyme; part of the gene cluster that mediates the biosynthesis of phenalenones such as herqueinone, compounds that have been reported to treat tumors, bacterial infections and/or mycoses, and rheumatic diseases. The non-reducing polyketide synthase phnA synthesizes the heptaketide backbone and cyclizes it into the angular, hemiketal-containing naphtho-gamma-pyrone prephenalenone. The product template (PT) domain of phnA catalyzes only the C4-C9 aldol condensation, which is unprecedented among known PT domains. The transformation of prephenalenone to phenalenones requires an FAD-dependent monooxygenase phnB, which catalyzes the C2 aromatic hydroxylation of prephenalenone and ring opening of the gamma-pyrone ring simultaneously. Subsequent intramolecular deprotonation of C3 phenolic oxygen accelerates phenalenone ring closure to yield the tricyclic phenalenone core with a C2 hydroxylation. The prenyltransferase phnF further catalyzes reverse C-prenylation of phenalenone by direct electrophilic substitution at C6, or possibly via first a forward O-prenylation of a neighboring phenol in phenalenone, followed by a Claisen rearrangement. The hydroalkoxylation enzyme phnH catalyzes the 5-exo-trig cyclization via acid catalysis after the spontaneous deprotonation of 7-OH, which leads to the formation of the dihydrobenzofuran atrovenetin. Atrovenetin is further converted to deoxyherqueinone by the O-methyltransferase phnC which can methylate C2-OH to stabilize the northern portion of the phenalenone core. Finally, the oxidoreductase phnG converts deoxyherqueinone to herqueinone via C6 hydroxylation. In Penicillium herquei, this protein is Hydroalkoxylation enzyme phnH.